The primary structure comprises 266 residues: Respiratory nitrate reductase beta chain (266 aa).

2 consecutive 4Fe-4S ferredoxin-type domains span residues 3-32 and 30-61; these read VGMVLNLDKCIGCHTCSVTCKEGMEYAWFN and WFNNVESKLCEHCLNPACVATCPSGAIYKREE. Residues Cys-12, Cys-15, Cys-18, Cys-22, Cys-39, Cys-42, and Cys-47 each contribute to the [4Fe-4S] cluster site. Cys-51 and Cys-73 together coordinate [3Fe-4S] cluster. The [4Fe-4S] cluster site is built by Cys-77, Cys-81, Cys-84, Cys-96, and Cys-100.

Heterotrimer composed of an alpha, a beta and a gamma chain. Alpha and beta are catalytic chains; gamma chains are involved in binding the enzyme complex to the cytoplasmic membrane. The cofactor is [4Fe-4S] cluster. Requires [3Fe-4S] cluster as cofactor.

The protein resides in the cell membrane. Its subcellular location is the cytoplasm. It carries out the reaction nitrate + a quinol = a quinone + nitrite + H2O. Its activity is regulated as follows. Inhibited by micromolar concentrations of azide. Functionally, the nitrate reductase enzyme complex allows Bradyrhizobium sp. USDA 3045 to use nitrate as an electron acceptor during anaerobic growth. The beta chain is an electron transfer unit containing four cysteine clusters involved in the formation of iron-sulfur centers. Electrons are transferred from the gamma chain to the molybdenum cofactor of the alpha subunit. In Bradyrhizobium sp, this protein is Respiratory nitrate reductase beta chain (narH).